Consider the following 271-residue polypeptide: Phosphatidylglycerol--prolipoprotein diacylglyceryl transferase (271 aa).

7 consecutive transmembrane segments (helical) span residues 21–41 (ISVRWYGLMYLFGFLFAMWLA), 60–80 (LLFAGFLGVVLGGRIGYVLFY), 95–115 (VWTGGMSFHGGLLGVITAMLW), 124–144 (FFGVADFVAPLVPFGLGVGRL), 176–196 (SQLYEMALEGVLLFFILNWFI), 203–223 (GSVSGLFLAGYGTFRFLVEYV), and 230–250 (LGLFGGFISMGQILSSPMIIG). Arginine 143 serves as a coordination point for a 1,2-diacyl-sn-glycero-3-phospho-(1'-sn-glycerol).

The protein belongs to the Lgt family.

The protein localises to the cell inner membrane. The catalysed reaction is L-cysteinyl-[prolipoprotein] + a 1,2-diacyl-sn-glycero-3-phospho-(1'-sn-glycerol) = an S-1,2-diacyl-sn-glyceryl-L-cysteinyl-[prolipoprotein] + sn-glycerol 1-phosphate + H(+). It functions in the pathway protein modification; lipoprotein biosynthesis (diacylglyceryl transfer). In terms of biological role, catalyzes the transfer of the diacylglyceryl group from phosphatidylglycerol to the sulfhydryl group of the N-terminal cysteine of a prolipoprotein, the first step in the formation of mature lipoproteins. The chain is Phosphatidylglycerol--prolipoprotein diacylglyceryl transferase from Vibrio vulnificus (strain YJ016).